The chain runs to 334 residues: Mevalonate kinase (334 aa).

110–120 (PVGAGLGSSAA) is a binding site for ATP. D161 serves as the catalytic Proton acceptor.

Belongs to the GHMP kinase family. Mevalonate kinase subfamily. As to quaternary structure, homodimer. Mg(2+) serves as cofactor.

The protein resides in the cytoplasm. It carries out the reaction (R)-mevalonate + ATP = (R)-5-phosphomevalonate + ADP + H(+). Its pathway is isoprenoid biosynthesis; isopentenyl diphosphate biosynthesis via mevalonate pathway; isopentenyl diphosphate from (R)-mevalonate: step 1/3. Its function is as follows. Catalyzes the phosphorylation of (R)-mevalonate (MVA) to (R)-mevalonate 5-phosphate (MVAP). Functions in the mevalonate (MVA) pathway leading to isopentenyl diphosphate (IPP), a key precursor for the biosynthesis of isoprenoid compounds such as archaeal membrane lipids. The chain is Mevalonate kinase from Pyrococcus furiosus (strain ATCC 43587 / DSM 3638 / JCM 8422 / Vc1).